Consider the following 363-residue polypeptide: MTIYNFSAGPAVLPKPVLERAQAEFLDYNGSGMSVLEMSHRSKDFDDIIKGAEATLRELMAIPDNYKVIFLQGGASLEFTMIPLNFAQGKKAYYLVGGSWGKKAYTEAVKLSKTIAFEPILLGSTEDITYAELPTFDKNDIDPTAAYVHLTTNNTIEGTAVYDIPDTNGVPVIADMSSNILAARYNVEDFAMIYAGAQKNIGPAGVTVVIVREDFLNDQPMLSSMLDYRIQAENDSLYNTPPAYSIYISKLVFEWVKEIGGVDEMEKINREKSGLLYDYIDQSNFYTNPVRKKEERSVANIPFVSPSEELDAKFVKEATAAGFKNIKGHRSVGGMRASLYNAFPRQGVVELIEFMKKFAVENA.

Arg-41 contacts L-glutamate. Residues 75-76 (AS), Trp-100, Thr-155, Asp-175, and Gln-198 each bind pyridoxal 5'-phosphate. Position 199 is an N6-(pyridoxal phosphate)lysine (Lys-199). 239-240 (NT) lines the pyridoxal 5'-phosphate pocket.

This sequence belongs to the class-V pyridoxal-phosphate-dependent aminotransferase family. SerC subfamily. In terms of assembly, homodimer. The cofactor is pyridoxal 5'-phosphate.

It is found in the cytoplasm. The catalysed reaction is O-phospho-L-serine + 2-oxoglutarate = 3-phosphooxypyruvate + L-glutamate. It catalyses the reaction 4-(phosphooxy)-L-threonine + 2-oxoglutarate = (R)-3-hydroxy-2-oxo-4-phosphooxybutanoate + L-glutamate. It functions in the pathway amino-acid biosynthesis; L-serine biosynthesis; L-serine from 3-phospho-D-glycerate: step 2/3. Functionally, catalyzes the reversible conversion of 3-phosphohydroxypyruvate to phosphoserine and of 3-hydroxy-2-oxo-4-phosphonooxybutanoate to phosphohydroxythreonine. In Streptococcus suis (strain 98HAH33), this protein is Phosphoserine aminotransferase.